Reading from the N-terminus, the 235-residue chain is tRNA pseudouridine synthase B (235 aa).

The active-site Nucleophile is aspartate 45.

It belongs to the pseudouridine synthase TruB family. Type 1 subfamily.

It catalyses the reaction uridine(55) in tRNA = pseudouridine(55) in tRNA. Its function is as follows. Responsible for synthesis of pseudouridine from uracil-55 in the psi GC loop of transfer RNAs. The protein is tRNA pseudouridine synthase B of Chlamydia pneumoniae (Chlamydophila pneumoniae).